The sequence spans 725 residues: MEQSNDSLRVNHNDGEESKTSAQVFEHLICMDSRDSSFGQNDSPTVLPITTREANNSLISQNIPGPLTQTQTLSAEQFHLVDQNGQAIQYELQSLGESNAQMMIVASPTENGQVLRVIPPTQTGMAQVIIPQGQLVDVNSPRDVPEEKPSNRNLPTVRVDTLADNTSNYILHPQTSFPLPKKSVTGMLEEPLLGPLQPLSSNTPIWACRLRSCEKIGDSYRGYCVSETELESVLTFHKQQTQSVWGTRQSPSPAKPATRLMWKSQYVPYDGIPFVNAGSRAVVMECQYGPRRKGFQLKKVSEQESRSCQLYKATCPARIYIKKVQKFPEYRVPTDPKIDKKIIRMEQEKAFNMLKKNLVDAGGVLRWYVQLPTQQAHQYHELETPCLTLSPSPFPVSSLEEEETAVRDENCALPSRLHPQVAHKIQELVSQGIEQVYAVRKQLRKFVERELFKPDEVPERHNLSFFPTVNDIKNHIHEVQKSLRNGDTVYNSEIIPATLQWTTDSGNILKETMTVTFAEGNSPGESITTKVETNQTRGSLSPEPTHLLSSLSSFQPKIFTQLQGLQLQPRYTSPDESPAVVSVNNQPSSSPSGLLDTIGSAVMNNNSLLLGQSHSLQRDTCLTQNNSTASTMGNLPEPDQNLVAMDELVEVGDVEDTGNLEGTVHRILLGDVQTIPIQIIDNHSALIEENPESTISVSQVKQEPKEPALSMEAKKTVDYKKLSAT.

Residues 572-592 (TSPDESPAVVSVNNQPSSSPS) are disordered. The span at 577–592 (SPAVVSVNNQPSSSPS) shows a compositional bias: low complexity.

It is found in the nucleus. Its function is as follows. Acts as a transcriptional activator that mediates the calcium- and neuron-selective induction of BDNF exon III transcription. Binds to the consensus calcium-response element CaRE1 5'-CTATTTCGAG-3' sequence. This Homo sapiens (Human) protein is Calcium-responsive transcription factor (CARF).